The sequence spans 418 residues: Gamma-glutamyl phosphate reductase (418 aa).

The protein belongs to the gamma-glutamyl phosphate reductase family.

Its subcellular location is the cytoplasm. It catalyses the reaction L-glutamate 5-semialdehyde + phosphate + NADP(+) = L-glutamyl 5-phosphate + NADPH + H(+). It functions in the pathway amino-acid biosynthesis; L-proline biosynthesis; L-glutamate 5-semialdehyde from L-glutamate: step 2/2. Catalyzes the NADPH-dependent reduction of L-glutamate 5-phosphate into L-glutamate 5-semialdehyde and phosphate. The product spontaneously undergoes cyclization to form 1-pyrroline-5-carboxylate. This chain is Gamma-glutamyl phosphate reductase, found in Aliivibrio fischeri (strain MJ11) (Vibrio fischeri).